The following is a 1253-amino-acid chain: Pleckstrin homology-like domain family B member 2 (1253 aa).

Residues 1 to 12 show a composition bias toward basic and acidic residues; that stretch reads MEEHSYIQKELD. Disordered regions lie at residues 1 to 43, 60 to 159, and 187 to 212; these read MEEH…PKKY, LTLS…KSHD, and DAGP…RKMS. The span at 29–43 shows a compositional bias: polar residues; that stretch reads NDSQNMMESLSPKKY. Phosphoserine occurs at positions 71 and 73. Residues 74 to 96 are compositionally biased toward polar residues; the sequence is PLGTSVRSSPSLAKIQGSKQFSY. Over residues 126–144 the composition is skewed to basic and acidic residues; the sequence is ADFDHYTGRDSERALRLSE. 5 positions are modified to phosphoserine: Ser-157, Ser-204, Ser-212, Ser-242, and Ser-245. The segment at 265-286 is disordered; that stretch reads NQLTPLSLPPRNSLGNSKRTKL. Phosphoserine is present on residues Ser-330, Ser-334, Ser-348, Ser-351, Ser-384, Ser-387, Ser-415, Ser-420, Ser-468, Ser-489, and Ser-501. Phosphothreonine is present on Thr-504. Phosphoserine is present on Ser-513. Positions 525–567 are disordered; sequence LSQSSASFFTPRSTRNDELLSDLTRTPPPPSSTFPKASSESSY. Residues Thr-550 and Thr-574 each carry the phosphothreonine modification. 2 coiled-coil regions span residues 584–696 and 722–807; these read SQEL…LDNC and FEDL…LCNL. At Thr-898 the chain carries Phosphothreonine. Positions 1032–1098 form a coiled coil; that stretch reads IARIEEMERL…QKLIEKEVKI (67 aa). The 104-residue stretch at 1143–1246 folds into the PH domain; sequence EKTCRGFLIK…WMDVIVTGAE (104 aa).

Interacts with FLNC. Interacts with AMOTL2; interaction may facilitate PHLDB2 localization to the myotube podosome cortex that surrounds the core. Part of a cortical microtubule stabilization complex (CMSC) composed of KANK1, PPFIA1, PPFIBP1, ERC1/ELKS, PHLDB2/LL5beta, CLASPs, KIF21A and possibly additional interactors; within CMSCs KANK1 and PHLDB2/LL5beta appear to be the core components for targeting of microtubule-binding proteins KIF21A and CLASPs, whereas PPFIA1, PPFIBP1 and ERC1/ELKS serve as scaffolds for protein clustering.

It is found in the cytoplasm. The protein localises to the cell cortex. It localises to the membrane. The protein resides in the cell projection. Its subcellular location is the podosome. Seems to be involved in the assembly of the postsynaptic apparatus. May play a role in acetyl-choline receptor (AChR) aggregation in the postsynaptic membrane. The protein is Pleckstrin homology-like domain family B member 2 (PHLDB2) of Homo sapiens (Human).